The chain runs to 374 residues: Alcohol dehydrogenase class-3 (374 aa).

A2 carries the post-translational modification N-acetylalanine. Residues C45, H67, C97, C100, C103, C111, and C174 each contribute to the Zn(2+) site. K233 bears the N6-succinyllysine mark. S247 bears the Phosphoserine mark. N6-succinyllysine is present on K315. Phosphoserine is present on residues S324 and S351.

It belongs to the zinc-containing alcohol dehydrogenase family. Class-III subfamily. As to quaternary structure, homodimer. Zn(2+) is required as a cofactor.

The protein resides in the cytoplasm. It catalyses the reaction a primary alcohol + NAD(+) = an aldehyde + NADH + H(+). It carries out the reaction a secondary alcohol + NAD(+) = a ketone + NADH + H(+). The enzyme catalyses S-(hydroxymethyl)glutathione + NADP(+) = S-formylglutathione + NADPH + H(+). The catalysed reaction is S-(hydroxymethyl)glutathione + NAD(+) = S-formylglutathione + NADH + H(+). It catalyses the reaction 20-oxo-(5Z,8Z,11Z,14Z)-eicosatetraenoate + NAD(+) + H2O = (5Z,8Z,11Z,14Z)-eicosatetraenedioate + NADH + 2 H(+). It carries out the reaction 20-hydroxy-(5Z,8Z,11Z,14Z)-eicosatetraenoate + NAD(+) = 20-oxo-(5Z,8Z,11Z,14Z)-eicosatetraenoate + NADH + H(+). The enzyme catalyses S-nitrosoglutathione + NADH + H(+) = S-(hydroxysulfenamide)glutathione + NAD(+). Its function is as follows. Catalyzes the oxidation of long-chain primary alcohols and the oxidation of S-(hydroxymethyl) glutathione. Also oxidizes long chain omega-hydroxy fatty acids, such as 20-HETE, producing both the intermediate aldehyde, 20-oxoarachidonate and the end product, a dicarboxylic acid, (5Z,8Z,11Z,14Z)-eicosatetraenedioate. Class-III ADH is remarkably ineffective in oxidizing ethanol. Required for clearance of cellular formaldehyde, a cytotoxic and carcinogenic metabolite that induces DNA damage. Also acts as a S-nitroso-glutathione reductase by catalyzing the NADH-dependent reduction of S-nitrosoglutathione, thereby regulating protein S-nitrosylation. In Homo sapiens (Human), this protein is Alcohol dehydrogenase class-3.